Here is a 457-residue protein sequence, read N- to C-terminus: Cystathionine beta-lyase (457 aa).

The disordered stretch occupies residues M1–R41.

This sequence belongs to the trans-sulfuration enzymes family. It depends on pyridoxal 5'-phosphate as a cofactor.

Its subcellular location is the cytoplasm. The protein resides in the nucleus. The enzyme catalyses L,L-cystathionine + H2O = L-homocysteine + pyruvate + NH4(+). The catalysed reaction is an S-substituted L-cysteine + H2O = a thiol + pyruvate + NH4(+). Its pathway is amino-acid biosynthesis; L-methionine biosynthesis via de novo pathway; L-homocysteine from L-cystathionine: step 1/1. Its function is as follows. Involved in de novo synthesis of methionine. This is Cystathionine beta-lyase (met-2) from Neurospora crassa (strain ATCC 24698 / 74-OR23-1A / CBS 708.71 / DSM 1257 / FGSC 987).